The primary structure comprises 421 residues: Phosphoribosylamine--glycine ligase (421 aa).

The ATP-grasp domain occupies 108–314 (KEIMVKYNVP…FAQNIDDIMM (207 aa)). Position 134–195 (134–195 (IEEQGAPIVV…EEFLDGEEFS (62 aa))) interacts with ATP. Mg(2+) contacts are provided by glutamate 284 and asparagine 286.

Belongs to the GARS family. Mg(2+) is required as a cofactor. Requires Mn(2+) as cofactor.

The enzyme catalyses 5-phospho-beta-D-ribosylamine + glycine + ATP = N(1)-(5-phospho-beta-D-ribosyl)glycinamide + ADP + phosphate + H(+). It participates in purine metabolism; IMP biosynthesis via de novo pathway; N(1)-(5-phospho-D-ribosyl)glycinamide from 5-phospho-alpha-D-ribose 1-diphosphate: step 2/2. The protein is Phosphoribosylamine--glycine ligase of Streptococcus pyogenes serotype M1.